The chain runs to 184 residues: Shikimate kinase (184 aa).

Residue 17-22 participates in ATP binding; the sequence is SVGKTS. Thr-21 serves as a coordination point for Mg(2+). Substrate contacts are provided by Asp-39 and Gly-85.

This sequence belongs to the shikimate kinase family. In terms of assembly, monomer. Requires Mg(2+) as cofactor.

It localises to the cytoplasm. It catalyses the reaction shikimate + ATP = 3-phosphoshikimate + ADP + H(+). It participates in metabolic intermediate biosynthesis; chorismate biosynthesis; chorismate from D-erythrose 4-phosphate and phosphoenolpyruvate: step 5/7. In terms of biological role, catalyzes the specific phosphorylation of the 3-hydroxyl group of shikimic acid using ATP as a cosubstrate. The polypeptide is Shikimate kinase (Chlamydia muridarum (strain MoPn / Nigg)).